We begin with the raw amino-acid sequence, 459 residues long: Cysteine--tRNA ligase (459 aa).

C28 contributes to the Zn(2+) binding site. A 'HIGH' region motif is present at residues 30–40 (ITIYDYCHIGH). 3 residues coordinate Zn(2+): C209, H234, and E238. A 'KMSKS' region motif is present at residues 266-270 (KMSKS). An ATP-binding site is contributed by K269.

The protein belongs to the class-I aminoacyl-tRNA synthetase family. Monomer. Requires Zn(2+) as cofactor.

It localises to the cytoplasm. It catalyses the reaction tRNA(Cys) + L-cysteine + ATP = L-cysteinyl-tRNA(Cys) + AMP + diphosphate. The chain is Cysteine--tRNA ligase from Pseudoalteromonas translucida (strain TAC 125).